Consider the following 492-residue polypeptide: N-succinylglutamate 5-semialdehyde dehydrogenase (492 aa).

220-225 lines the NAD(+) pocket; the sequence is GSAGTG. Residues E243 and C277 contribute to the active site.

This sequence belongs to the aldehyde dehydrogenase family. AstD subfamily.

It carries out the reaction N-succinyl-L-glutamate 5-semialdehyde + NAD(+) + H2O = N-succinyl-L-glutamate + NADH + 2 H(+). It functions in the pathway amino-acid degradation; L-arginine degradation via AST pathway; L-glutamate and succinate from L-arginine: step 4/5. In terms of biological role, catalyzes the NAD-dependent reduction of succinylglutamate semialdehyde into succinylglutamate. The protein is N-succinylglutamate 5-semialdehyde dehydrogenase of Cronobacter sakazakii (strain ATCC BAA-894) (Enterobacter sakazakii).